The primary structure comprises 337 residues: Probable poly [ADP-ribose] polymerase DDB_G0278045 (337 aa).

The PARP catalytic domain occupies 21-231; the sequence is KKWDIIYKQR…NNNKNKNKNN (211 aa). A compositionally biased stretch (low complexity) spans 218–242; the sequence is NNTNNNNKNKNKNNNKNNNKNIKIQ. Positions 218-247 are disordered; sequence NNTNNNNKNKNKNNNKNNNKNIKIQNENKN.

It carries out the reaction L-aspartyl-[protein] + NAD(+) = 4-O-(ADP-D-ribosyl)-L-aspartyl-[protein] + nicotinamide. The catalysed reaction is L-glutamyl-[protein] + NAD(+) = 5-O-(ADP-D-ribosyl)-L-glutamyl-[protein] + nicotinamide. It catalyses the reaction NAD(+) + (ADP-D-ribosyl)n-acceptor = nicotinamide + (ADP-D-ribosyl)n+1-acceptor + H(+).. The polypeptide is Probable poly [ADP-ribose] polymerase DDB_G0278045 (Dictyostelium discoideum (Social amoeba)).